Consider the following 192-residue polypeptide: Shikimate kinase (192 aa).

32 to 37 contacts ATP; that stretch reads GAGKSA. Ser-36 is a binding site for Mg(2+). Residues Asp-54, Arg-78, and Gly-100 each contribute to the substrate site. Arg-138 provides a ligand contact to ATP. Substrate is bound at residue Arg-157.

It belongs to the shikimate kinase family. In terms of assembly, monomer. Mg(2+) is required as a cofactor.

Its subcellular location is the cytoplasm. It catalyses the reaction shikimate + ATP = 3-phosphoshikimate + ADP + H(+). It participates in metabolic intermediate biosynthesis; chorismate biosynthesis; chorismate from D-erythrose 4-phosphate and phosphoenolpyruvate: step 5/7. Catalyzes the specific phosphorylation of the 3-hydroxyl group of shikimic acid using ATP as a cosubstrate. The sequence is that of Shikimate kinase from Rhizobium meliloti (strain 1021) (Ensifer meliloti).